The sequence spans 346 residues: RISC-loading complex subunit tarbp2 (346 aa).

DRBM domains lie at 30–97, 139–207, and 273–341; these read TPIS…MLKG, NPVG…RIHD, and NFCS…YLKI.

Belongs to the TARBP2 family. In terms of assembly, self-associates. Component of the RISC loading complex (RLC), or micro-RNA (miRNA) loading complex (miRLC), which is composed of dicer1, ago2 and tarbp2. Note that the trimeric RLC/miRLC is also referred to as RISC.

It is found in the cytoplasm. Functionally, required for formation of the RNA induced silencing complex (RISC). Component of the RISC loading complex (RLC), also known as the micro-RNA (miRNA) loading complex (miRLC), which is composed of dicer1, ago2 and tarbp2. Within the RLC/miRLC, dicer1 and tarbp2 are required to process precursor miRNAs (pre-miRNAs) to mature miRNAs and then load them onto ago2. ago2 bound to the mature miRNA constitutes the minimal RISC and may subsequently dissociate from dicer1 and tarbp2. May also play a role in the production of short interfering RNAs (siRNAs) from double-stranded RNA (dsRNA) by dicer1. Binds in vitro to the PRM1 3'-UTR. Seems to act as a repressor of translation. For some pre-miRNA substrates, may also alter the choice of cleavage site by DICER1. The sequence is that of RISC-loading complex subunit tarbp2 (tarbp2) from Danio rerio (Zebrafish).